The primary structure comprises 729 residues: Denticleless protein homolog (729 aa).

N-acetylmethionine is present on Met1. 3 WD repeats span residues 47–89, 96–135, and 138–178; these read GVPV…SKKT, AHWNAVFDLAWVPGELKLVTAAGDQTAKFWDVRAGELMGT, and GHQC…KDGF. A DDB1-binding motif motif is present at residues 168 to 171; it reads WDTR. Over residues 189–198 the composition is skewed to polar residues; sequence HNTADKQTPS. Residues 189–212 form a disordered region; the sequence is HNTADKQTPSKPKKKQNSKGLAPA. Phosphothreonine is present on Thr196. Residues 197–203 carry the Nuclear localization signal motif; sequence PSKPKKK. 4 WD repeats span residues 214–253, 269–308, 313–354, and 358–398; these read DSQQSVTVVLFQDENTLVSAGAVDGIIKVWDLRKNYTAYR, TRKLGYSSLVLDSTGSTLFANCTDDNIYMFNMTGLKTSPV, GHQN…HPPT, and GHSQ…EEKP. The DDB1-binding motif motif lies at 243–246; it reads WDLR. Ser409 and Ser425 each carry phosphoserine. Disordered stretches follow at residues 416–445 and 460–491; these read KACPVTVPSSQSTPAKAPRAKSSPSISSPS and PSSTPTFSVKTTPATTRSSVSRRGSISSVSPK. A compositionally biased stretch (low complexity) spans 427–445; the sequence is STPAKAPRAKSSPSISSPS. The span at 460–475 shows a compositional bias: polar residues; the sequence is PSSTPTFSVKTTPATT. At Thr463 the chain carries Phosphothreonine; by CDK1 and CDK2. Low complexity predominate over residues 476-491; that stretch reads RSSVSRRGSISSVSPK. Phosphoserine occurs at positions 484, 489, 494, and 511. Positions 504–546 are disordered; that stretch reads VTRTPSSSPPVTPPASETKISSPRKALIPVSQKSSQADACSES. Thr515 is modified (phosphothreonine). Residue Ser556 is modified to Phosphoserine. A compositionally biased stretch (polar residues) spans 596–607; sequence VLSQDSEGPTKS. The segment at 596–705 is disordered; sequence VLSQDSEGPT…GPVTITPSSM (110 aa). Composition is skewed to low complexity over residues 630–645 and 674–688; these read EGCGPLPLPLRPCGEG and SSPRSPSSQTPSSRR. Residues Ser675 and Ser678 each carry the phosphoserine modification. 2 positions are modified to phosphothreonine: Thr683 and Thr701.

The protein belongs to the WD repeat cdt2 family. As to quaternary structure, component of the DCX(DTL) E3 ubiquitin ligase complex (also called CRL4(CDT2)), at least composed of CUL4 (CUL4A or CUL4B), DDB1, DTL/CDT2 and RBX1. Interacts with CDKN1A and DDB1. Interacts with FBXO11; SCF(FBXWO11) controls DTL stability but DCX(DTL) does not control FBXO11 stability. Interacts with CRY1. Post-translationally, ubiquitinated by the anaphase promoting complex/cyclosome (APC/C). Autoubiquitinated through 'Lys-48'-polyubiquitin chains in a PCNA-independent reaction, allowing proteasomal turnover. Polyubiquitinated by SCF(FBXO11) when not phosphorylated, leading to its degradation. A tight regulation of the polyubiquitination by SCF(FBXO11) is involved in the control of different processes such as TGF-beta signaling, cell cycle progression and exit. In terms of processing, phosphorylated at Thr-463 by CDK1/Cyclin B and CDK2/Cycnlin A but not by CDK2/Cyclin E, MAPK1 or PLK1. Phosphorylation at Thr-463 inhibits the interaction with FBXO11 and decreases upon cell cycle exit induced by TGF-beta or serum starvation.

It is found in the nucleus. The protein resides in the nucleus membrane. Its subcellular location is the cytoplasm. The protein localises to the cytoskeleton. It localises to the microtubule organizing center. It is found in the centrosome. The protein resides in the chromosome. It participates in protein modification; protein ubiquitination. Its function is as follows. Substrate-specific adapter of a DCX (DDB1-CUL4-X-box) E3 ubiquitin-protein ligase complex required for cell cycle control, DNA damage response and translesion DNA synthesis. The DCX(DTL) complex, also named CRL4(CDT2) complex, mediates the polyubiquitination and subsequent degradation of CDT1, CDKN1A/p21(CIP1), FBH1, KMT5A and SDE2. CDT1 degradation in response to DNA damage is necessary to ensure proper cell cycle regulation of DNA replication. CDKN1A/p21(CIP1) degradation during S phase or following UV irradiation is essential to control replication licensing. KMT5A degradation is also important for a proper regulation of mechanisms such as TGF-beta signaling, cell cycle progression, DNA repair and cell migration. Most substrates require their interaction with PCNA for their polyubiquitination: substrates interact with PCNA via their PIP-box, and those containing the 'K+4' motif in the PIP box, recruit the DCX(DTL) complex, leading to their degradation. In undamaged proliferating cells, the DCX(DTL) complex also promotes the 'Lys-164' monoubiquitination of PCNA, thereby being involved in PCNA-dependent translesion DNA synthesis. The DDB1-CUL4A-DTL E3 ligase complex regulates the circadian clock function by mediating the ubiquitination and degradation of CRY1. This chain is Denticleless protein homolog (Dtl), found in Mus musculus (Mouse).